A 20-amino-acid polypeptide reads, in one-letter code: Hemocyanin subunit 6 (20 aa).

Belongs to the tyrosinase family. Hemocyanin subfamily. As to expression, hemolymph.

Its subcellular location is the secreted. The protein resides in the extracellular space. In terms of biological role, hemocyanins are copper-containing oxygen carriers occurring freely dissolved in the hemolymph of many mollusks and arthropods. This is Hemocyanin subunit 6 from Homarus americanus (American lobster).